The sequence spans 281 residues: Light-independent protochlorophyllide reductase iron-sulfur ATP-binding protein (281 aa).

ATP-binding positions include 10-15 (GIGKST) and K39. S14 lines the Mg(2+) pocket. Residues C95 and C129 each coordinate [4Fe-4S] cluster. 180-181 (NR) contacts ATP.

It belongs to the NifH/BchL/ChlL family. Homodimer. Protochlorophyllide reductase is composed of three subunits; ChlL, ChlN and ChlB. The cofactor is [4Fe-4S] cluster.

It catalyses the reaction chlorophyllide a + oxidized 2[4Fe-4S]-[ferredoxin] + 2 ADP + 2 phosphate = protochlorophyllide a + reduced 2[4Fe-4S]-[ferredoxin] + 2 ATP + 2 H2O. The protein operates within porphyrin-containing compound metabolism; chlorophyll biosynthesis (light-independent). Functionally, component of the dark-operative protochlorophyllide reductase (DPOR) that uses Mg-ATP and reduced ferredoxin to reduce ring D of protochlorophyllide (Pchlide) to form chlorophyllide a (Chlide). This reaction is light-independent. The L component serves as a unique electron donor to the NB-component of the complex, and binds Mg-ATP. This Thermosynechococcus vestitus (strain NIES-2133 / IAM M-273 / BP-1) protein is Light-independent protochlorophyllide reductase iron-sulfur ATP-binding protein.